The primary structure comprises 80 residues: Defensin-like protein 18 (80 aa).

A signal peptide spans M1–A29. Disulfide bonds link C32–C80, C43–C64, C49–C74, and C53–C76.

The protein belongs to the DEFL family.

It localises to the secreted. Confers broad-spectrum resistance to pathogens. The polypeptide is Defensin-like protein 18 (PDF1.5) (Arabidopsis thaliana (Mouse-ear cress)).